The following is a 241-amino-acid chain: Small ribosomal subunit protein uS3 (241 aa).

The region spanning 39-107 (IREILHKELK…DVVINIVEIR (69 aa)) is the KH type-2 domain. Residues 217-241 (KRMAEGETGGGGDRGGRQRRDNAAV) are disordered. Residues 230 to 241 (RGGRQRRDNAAV) show a composition bias toward basic and acidic residues.

The protein belongs to the universal ribosomal protein uS3 family. As to quaternary structure, part of the 30S ribosomal subunit. Forms a tight complex with proteins S10 and S14.

Binds the lower part of the 30S subunit head. Binds mRNA in the 70S ribosome, positioning it for translation. The sequence is that of Small ribosomal subunit protein uS3 from Bradyrhizobium diazoefficiens (strain JCM 10833 / BCRC 13528 / IAM 13628 / NBRC 14792 / USDA 110).